The sequence spans 319 residues: Glutamyl-Q tRNA(Asp) synthetase (319 aa).

L-glutamate contacts are provided by residues 23 to 27 and glutamate 59; that span reads RFAPS. A 'HIGH' region motif is present at residues 26 to 36; it reads PSPSGPLHAGS. Positions 115, 117, 139, and 143 each coordinate Zn(2+). L-glutamate is bound by residues tyrosine 197 and arginine 215. The 'KMSKS' region signature appears at 254–258; that stretch reads KLSKQ. Lysine 257 provides a ligand contact to ATP.

Belongs to the class-I aminoacyl-tRNA synthetase family. GluQ subfamily. Requires Zn(2+) as cofactor.

In terms of biological role, catalyzes the tRNA-independent activation of glutamate in presence of ATP and the subsequent transfer of glutamate onto a tRNA(Asp). Glutamate is transferred on the 2-amino-5-(4,5-dihydroxy-2-cyclopenten-1-yl) moiety of the queuosine in the wobble position of the QUC anticodon. The chain is Glutamyl-Q tRNA(Asp) synthetase from Bordetella bronchiseptica (strain ATCC BAA-588 / NCTC 13252 / RB50) (Alcaligenes bronchisepticus).